A 657-amino-acid chain; its full sequence is Histidine ammonia-lyase (657 aa).

Positions 253-255 (ASG) form a cross-link, 5-imidazolinone (Ala-Gly). Residue Ser254 is modified to 2,3-didehydroalanine (Ser). Thr396 is subject to Phosphothreonine. Ser635 is modified (phosphoserine). Thr637 is subject to Phosphothreonine. Ser648 carries the post-translational modification Phosphoserine.

This sequence belongs to the PAL/histidase family. Contains an active site 4-methylidene-imidazol-5-one (MIO), which is formed autocatalytically by cyclization and dehydration of residues Ala-Ser-Gly.

It carries out the reaction L-histidine = trans-urocanate + NH4(+). It participates in amino-acid degradation; L-histidine degradation into L-glutamate; N-formimidoyl-L-glutamate from L-histidine: step 1/3. The chain is Histidine ammonia-lyase (Hal) from Mus musculus (Mouse).